A 212-amino-acid polypeptide reads, in one-letter code: Peroxiredoxin 2 (212 aa).

The region spanning 7 to 162 (PLIGEKFPEM…ILRSIRALQL (156 aa)) is the Thioredoxin domain. The active-site Cysteine sulfenic acid (-SOH) intermediate is the Cys49. Arg125 provides a ligand contact to substrate.

The protein belongs to the peroxiredoxin family. Prx6 subfamily. Homodecamer. Pentamer of dimers that assemble into a ring structure.

The protein localises to the cytoplasm. The enzyme catalyses a hydroperoxide + [thioredoxin]-dithiol = an alcohol + [thioredoxin]-disulfide + H2O. In terms of biological role, thiol-specific peroxidase that catalyzes the reduction of hydrogen peroxide and organic hydroperoxides to water and alcohols, respectively. Plays a role in cell protection against oxidative stress by detoxifying peroxides. The polypeptide is Peroxiredoxin 2 (Sulfurisphaera tokodaii (strain DSM 16993 / JCM 10545 / NBRC 100140 / 7) (Sulfolobus tokodaii)).